The primary structure comprises 314 residues: Lysophospholipase D GDPD1 (314 aa).

Topologically, residues 1 to 3 (MSS) are extracellular. Residues 4 to 24 (TAAFCLLSTLGGYLVTSFLLL) traverse the membrane as a helical segment. The Cytoplasmic segment spans residues 25-195 (KYPALLHQRK…VDKCYKENSD (171 aa)). The GP-PDE domain occupies 40 to 309 (SRHISHRGGA…DYPTKLKDFL (270 aa)). Residues E72, D74, and H87 each coordinate a divalent metal cation. Residues 196–216 (IPILFSLQRVLLILGLFFTGL) traverse the membrane as a helical segment. Topologically, residues 217 to 314 (LPFVPIREQF…LKDFLNNFSA (98 aa)) are extracellular.

It belongs to the glycerophosphoryl diester phosphodiesterase family. As to expression, widely expressed.

The protein resides in the cytoplasm. It localises to the membrane. Its subcellular location is the perinuclear region. It is found in the endoplasmic reticulum. The enzyme catalyses 1-hexadecanoyl-sn-glycero-3-phosphocholine + H2O = 1-hexadecanoyl-sn-glycero-3-phosphate + choline + H(+). It carries out the reaction 1-hexadecanoyl-sn-glycero-3-phosphoethanolamine + H2O = 1-hexadecanoyl-sn-glycero-3-phosphate + ethanolamine + H(+). The catalysed reaction is N-hexadecanoyl-sn-glycero-3-phosphoethanolamine + H2O = N-hexadecanoylethanolamine + sn-glycerol 3-phosphate + H(+). It catalyses the reaction N-(5Z,8Z,11Z,14Z-eicosatetraenoyl)-1-(9Z-octadecenoyl)-sn-glycero-3-phosphoethanolamine + H2O = N-(5Z,8Z,11Z,14Z-eicosatetraenoyl)-ethanolamine + 1-(9Z-octadecenoyl)-sn-glycero-3-phosphate + H(+). The enzyme catalyses N,1-di-(9Z-octadecenoyl)-sn-glycero-3-phosphoethanolamine + H2O = N-(9Z-octadecenoyl) ethanolamine + 1-(9Z-octadecenoyl)-sn-glycero-3-phosphate + H(+). It carries out the reaction N-hexadecanoyl-1-(9Z-octadecenoyl)-sn-glycero-3-phosphoethanolamine + H2O = N-hexadecanoylethanolamine + 1-(9Z-octadecenoyl)-sn-glycero-3-phosphate + H(+). The catalysed reaction is a 1-O-alkyl-sn-glycero-3-phosphocholine + H2O = a 1-O-alkyl-sn-glycero-3-phosphate + choline + H(+). It catalyses the reaction 1-O-hexadecyl-sn-glycero-3-phosphocholine + H2O = 1-O-hexadecyl-sn-glycero-3-phosphate + choline + H(+). The enzyme catalyses 1-(9Z-octadecenoyl)-sn-glycero-3-phosphocholine + H2O = 1-(9Z-octadecenoyl)-sn-glycero-3-phosphate + choline + H(+). It carries out the reaction N,1-dihexadecanoyl-sn-glycero-3-phosphoethanolamine + H2O = N-hexadecanoylethanolamine + 1-hexadecanoyl-sn-glycero-3-phosphate + H(+). The catalysed reaction is 1-O-(1Z-octadecenyl)-sn-glycero-3-phospho-(N-5Z,8Z,11Z,14Z-eicosatetraenoyl)-ethanolamine + H2O = 1-O-(1Z-octadecenyl)-sn-glycero-3-phosphate + N-(5Z,8Z,11Z,14Z-eicosatetraenoyl)-ethanolamine + H(+). It catalyses the reaction 1-O-(1Z-octadecenyl)-sn-glycero-3-phospho-(N-9Z-octadecenoyl)-ethanolamine + H2O = 1-O-(1Z-octadecenyl)-sn-glycero-3-phosphate + N-(9Z-octadecenoyl) ethanolamine + H(+). The enzyme catalyses 1-O-(1Z-octadecenyl)-sn-glycero-3-phospho-N-hexadecanoyl-ethanolamine + H2O = 1-O-(1Z-octadecenyl)-sn-glycero-3-phosphate + N-hexadecanoylethanolamine + H(+). With respect to regulation, lysophospholipase D activity is increased by magnesium and manganese and inhibited by calcium in a concentration dependent manner. Loss of lysophospholipase D activity by addition of EDTA. Hydrolyzes lysoglycerophospholipids to produce lysophosphatidic acid (LPA) and the corresponding amines. Shows a preference for 1-O-alkyl-sn-glycero-3-phosphocholine (lyso-PAF), lysophosphatidylethanolamine (lyso-PE) and lysophosphatidylcholine (lyso-PC). May be involved in bioactive N-acylethanolamine biosynthesis from both N-acyl-lysoplasmenylethanolamin (N-acyl-lysoPlsEt) and N-acyl-lysophosphatidylethanolamin (N-acyl-lysoPE). In addition, hydrolyzes glycerophospho-N-acylethanolamine to N-acylethanolamine. Does not display glycerophosphodiester phosphodiesterase activity, since it cannot hydrolyze either glycerophosphoinositol or glycerophosphocholine. This chain is Lysophospholipase D GDPD1, found in Mus musculus (Mouse).